The chain runs to 297 residues: Chelated iron transport system membrane protein YfeD (297 aa).

Transmembrane regions (helical) follow at residues 20–40 (AIVA…YLVL), 58–78 (IVLA…SGIF), 96–116 (TVMG…FSRI), 133–153 (ISLT…LVVL), 172–192 (IGLP…LTIV), 197–217 (AVGV…AFMI), 224–244 (MLVV…LISF), and 248–268 (GATG…ALIY).

Belongs to the ABC-3 integral membrane protein family.

It is found in the cell inner membrane. Its function is as follows. Part of an ATP-driven transport system YfeABCD for chelated iron. The chain is Chelated iron transport system membrane protein YfeD (yfeD) from Yersinia pestis.